The chain runs to 468 residues: Uronate isomerase (468 aa).

It belongs to the metallo-dependent hydrolases superfamily. Uronate isomerase family.

It catalyses the reaction D-glucuronate = D-fructuronate. The catalysed reaction is aldehydo-D-galacturonate = keto-D-tagaturonate. It participates in carbohydrate metabolism; pentose and glucuronate interconversion. The polypeptide is Uronate isomerase (Bacteroides fragilis (strain ATCC 25285 / DSM 2151 / CCUG 4856 / JCM 11019 / LMG 10263 / NCTC 9343 / Onslow / VPI 2553 / EN-2)).